The chain runs to 442 residues: Gamma-glutamyl phosphate reductase (442 aa).

The protein belongs to the gamma-glutamyl phosphate reductase family.

The protein localises to the cytoplasm. It carries out the reaction L-glutamate 5-semialdehyde + phosphate + NADP(+) = L-glutamyl 5-phosphate + NADPH + H(+). The protein operates within amino-acid biosynthesis; L-proline biosynthesis; L-glutamate 5-semialdehyde from L-glutamate: step 2/2. Its function is as follows. Catalyzes the NADPH-dependent reduction of L-glutamate 5-phosphate into L-glutamate 5-semialdehyde and phosphate. The product spontaneously undergoes cyclization to form 1-pyrroline-5-carboxylate. This is Gamma-glutamyl phosphate reductase from Campylobacter curvus (strain 525.92).